Consider the following 117-residue polypeptide: UPF0102 protein Rsph17029_0461 (117 aa).

It belongs to the UPF0102 family.

The polypeptide is UPF0102 protein Rsph17029_0461 (Cereibacter sphaeroides (strain ATCC 17029 / ATH 2.4.9) (Rhodobacter sphaeroides)).